The chain runs to 86 residues: Insulin (86 aa).

Cystine bridges form between cysteine 7-cysteine 72, cysteine 19-cysteine 85, and cysteine 71-cysteine 76. A propeptide spans 33 to 63 (ELEDPQVGQADPGVVPEAGRLQPLALEMTLQ) (c peptide).

This sequence belongs to the insulin family. As to quaternary structure, heterodimer of a B chain and an A chain linked by two disulfide bonds.

It localises to the secreted. In terms of biological role, insulin decreases blood glucose concentration. It increases cell permeability to monosaccharides, amino acids and fatty acids. It accelerates glycolysis, the pentose phosphate cycle, and glycogen synthesis in liver. The chain is Insulin (INS) from Chinchilla chinchilla (Short-tailed chinchilla).